The chain runs to 73 residues: Large ribosomal subunit protein bL31 (73 aa).

Positions 16, 18, 37, and 40 each coordinate Zn(2+).

The protein belongs to the bacterial ribosomal protein bL31 family. Type A subfamily. Part of the 50S ribosomal subunit. It depends on Zn(2+) as a cofactor.

In terms of biological role, binds the 23S rRNA. This Pseudomonas syringae pv. syringae (strain B728a) protein is Large ribosomal subunit protein bL31.